The primary structure comprises 205 residues: Glycerol-3-phosphate acyltransferase (205 aa).

Residues 1-3 (MSA) lie on the Periplasmic side of the membrane. The helical transmembrane segment at 4-24 (IAPGMILIAYLCGSISSAILV) threads the bilayer. Residues 25–52 (CRLCGLPDPRTSGSGNPGATNVLRIGGK) lie on the Cytoplasmic side of the membrane. Residues 53 to 73 (GAAVAVLIFDVLKGMLPVWGA) traverse the membrane as a helical segment. Over 74–80 (YELGVSP) the chain is Periplasmic. The chain crosses the membrane as a helical span at residues 81–101 (FWLGLIAIAACLGHIWPVFFG). The Cytoplasmic portion of the chain corresponds to 102–111 (FKGGKGVATA). The helical transmembrane segment at 112–132 (FGAIAPIGWDLTGVMAGTWLL) threads the bilayer. Topologically, residues 133–137 (TVLLS) are periplasmic. Residues 138-158 (GYSSLGAIVSALIAPFYVWWF) form a helical membrane-spanning segment. The Cytoplasmic segment spans residues 159–205 (KPQFTFPVSMLSCLILLRHHDNIQRLWRRQETKIWTKFKRKREKDPE).

Belongs to the PlsY family. As to quaternary structure, probably interacts with PlsX.

Its subcellular location is the cell inner membrane. It carries out the reaction sn-glycerol 3-phosphate + an acyl-CoA = a 1-acyl-sn-glycero-3-phosphate + CoA. The enzyme catalyses a fatty acyl-[ACP] + sn-glycerol 3-phosphate = a 1-acyl-sn-glycero-3-phosphate + holo-[ACP]. It participates in lipid metabolism; phospholipid metabolism. Catalyzes the transfer of an acyl group from acyl-ACP to glycerol-3-phosphate (G3P) to form lysophosphatidic acid (LPA). This enzyme can also utilize acyl-CoA as fatty acyl donor, but not acyl-PO(4). The protein is Glycerol-3-phosphate acyltransferase of Escherichia coli O8 (strain IAI1).